A 118-amino-acid polypeptide reads, in one-letter code: Pterin-4-alpha-carbinolamine dehydratase (118 aa).

Belongs to the pterin-4-alpha-carbinolamine dehydratase family.

It carries out the reaction (4aS,6R)-4a-hydroxy-L-erythro-5,6,7,8-tetrahydrobiopterin = (6R)-L-erythro-6,7-dihydrobiopterin + H2O. Functionally, involved in tetrahydrobiopterin biosynthesis. Seems to both prevent the formation of 7-pterins and accelerate the formation of quinonoid-BH2. May also have a positive regulatory role in the expression of phhA. In Pseudomonas syringae pv. tomato (strain ATCC BAA-871 / DC3000), this protein is Pterin-4-alpha-carbinolamine dehydratase (phhB).